The sequence spans 187 residues: Homeobox expressed in ES cells 1-B (187 aa).

The homeobox DNA-binding region spans 110-169 (GRRPRTAFTRSQIEILENVFRVNSYPGIDVREELASKLALDEDRIQIWFQNRRAKLKRSH).

This sequence belongs to the ANF homeobox family. As to quaternary structure, the N-terminus interacts with the LIM 2 domain of zyx. First expressed at a low level in the late blastula stage (stage 9) in most cells of the animal half of the embryo. Following this, predominantly expressed in two zones; the dorsal blastopore lip (Spemann organizer) at the beginning of gastrulation, and subsequently in the anterior part of the neural anlage (the region of future forebrain).

The protein resides in the nucleus. Regulates the earliest stages of development of the anterior neural plate. Plays a role in forebrain development by inhibiting the expression of otx2 and pax6 in the rostral region of the anterior neural plate. Necessary for both neural differentiation and neural patterning. Controls Spemann organizer development. May act as a transcriptional repressor. The sequence is that of Homeobox expressed in ES cells 1-B (hesx1-b) from Xenopus laevis (African clawed frog).